Here is a 122-residue protein sequence, read N- to C-terminus: Phospholipase A2 crotoxin basic chain (122 aa).

Cystine bridges form between Cys-26–Cys-115, Cys-28–Cys-44, Cys-43–Cys-95, Cys-49–Cys-122, Cys-50–Cys-88, Cys-57–Cys-81, and Cys-75–Cys-86. Ca(2+) contacts are provided by Tyr-27, Gly-29, and Gly-31. Residue His-47 is part of the active site. Position 48 (Asp-48) interacts with Ca(2+). Residue Asp-89 is part of the active site.

Heterodimer of one acidic (CA also named crotapotin) and one basic (CB) subunits; non-covalently linked. Ca(2+) is required as a cofactor. In terms of tissue distribution, expressed by the venom gland.

The protein resides in the secreted. The catalysed reaction is a 1,2-diacyl-sn-glycero-3-phosphocholine + H2O = a 1-acyl-sn-glycero-3-phosphocholine + a fatty acid + H(+). Functionally, heterodimer CA-CB: Crotoxin is a potent presynaptic neurotoxin that possesses phospholipase A2 (PLA2) activity and exerts a lethal action by blocking neuromuscular transmission. It consists of a non-covalent association of a basic and weakly toxic PLA2 subunit (CB), with a small acidic, non-enzymatic and non-toxic subunit (CA also named crotapotin). The complex acts by binding to a specific 48-kDa protein (R48) receptor located on presynaptic membranes, forming a transient ternary complex CA-CB-R48, followed by dissociation of the CA-CB complex and release of the CA subunit. At equilibrium, only the CB subunits remain associated with the specific crotoxin receptor. In addition to neurotoxicity, crotoxin has been found to exert nephrotoxicity, and cardiovascular toxicity. Moreover, anti-inflammatory, immunomodulatory, anti-tumor and analgesic effects of crotoxin have also been reported. In terms of biological role, monomer CB: The basic subunit of crotoxin is a snake venom phospholipase A2 (PLA2) that exhibits weak neurotoxicity and strong anticoagulant effects by binding to factor Xa (F10) and inhibiting the prothrombinase activity. In addition, it exerts myotoxicity, nephrotoxicity, and cardiovascular toxicity as well as anti-inflammatory, immunomodulatory, anti-tumor and analgesic effects. Also shows a strong antimicrobial activity against X.axonopodis passiforae (Gram-negative) which is completely dependent on the enzymatic activity. PLA2 catalyzes the calcium-dependent hydrolysis of the 2- acyl groups in 3-sn-phosphoglycerides. In Crotalus durissus collilineatus (Brazilian rattlesnake), this protein is Phospholipase A2 crotoxin basic chain.